A 150-amino-acid chain; its full sequence is Putative STAG3-like protein 4 (150 aa).

The protein belongs to the SCC3 family.

In Homo sapiens (Human), this protein is Putative STAG3-like protein 4 (STAG3L4).